Reading from the N-terminus, the 125-residue chain is Cardioactive peptide (125 aa).

Positions 1–22 (MTVSRVCLLLLVALVYLDCCYA) are cleaved as a signal peptide. Residues 23 to 42 (ASIPRNFDPRLSEEIVMAPK) constitute a propeptide that is removed on maturation. Residues C47 and C53 are joined by a disulfide bond. Residue C53 is modified to Cysteine amide. A propeptide spanning residues 57 to 125 (RSQGPPGMPA…RRKQKEAYIQ (69 aa)) is cleaved from the precursor.

Abdominal perivisceral organ; major neurohemal release site. Expressed in 116 neurons in post-embryonic central nervous system. Nine pairs of cells are observed in the brain, 4.5 pairs in the subesophageal ganglion, three pairs in each thoracic ganglion (T1-T3), three pairs in the first abdominal ganglion (A1), five pairs each in the second to sixth abdominal ganglia (A2-A6) and 7.5 pairs in the terminal ganglion. Expressed in every ganglion in each post-embryonic stage, except in the thoracic ganglia of first- and second-instar larvae. Colocalizes with CAP2b in median neurosecretory cells during the last larval instar through to adults.

It is found in the secreted. Cardioregulatory neurohormone that increases heart beat rate during adult wing inflation; has no effect on beat amplitude. The effect of CCAP is both ino- and chronotropic. The sequence is that of Cardioactive peptide from Manduca sexta (Tobacco hawkmoth).